The chain runs to 143 residues: Large-conductance mechanosensitive channel (143 aa).

A run of 2 helical transmembrane segments spans residues 19–39 and 81–101; these read VGVIIGAAFGAIVTSMVGDLI and GSFLTITLNFLIVAGVLFGVI.

It belongs to the MscL family. Homopentamer.

Its subcellular location is the cell inner membrane. Functionally, channel that opens in response to stretch forces in the membrane lipid bilayer. May participate in the regulation of osmotic pressure changes within the cell. This Rhodopseudomonas palustris (strain BisB5) protein is Large-conductance mechanosensitive channel.